The following is a 66-amino-acid chain: MPT51 antigen (66 aa).

An N-terminal signal peptide occupies residues Met1 to Ala38.

The protein belongs to the mycobacterial A85 antigen family. Homodimer.

It is found in the secreted. In terms of biological role, may have a role in host tissue attachment, whereby ligands may include the serum protein fibronectin and small sugars. The sequence is that of MPT51 antigen (mpt51) from Mycobacterium avium.